A 319-amino-acid chain; its full sequence is Protease HtpX homolog (319 aa).

The next 2 helical transmembrane spans lie at 6–26 and 28–48; these read TAML…VIGG and GGMM…YWNS. Residue His130 coordinates Zn(2+). The active site involves Glu131. His134 is a binding site for Zn(2+). 2 consecutive transmembrane segments (helical) span residues 145 to 165 and 172 to 192; these read LTAT…FFGG and PLGF…AMLV. Residue Glu201 participates in Zn(2+) binding. Residues 277-319 are disordered; that stretch reads MARETSTGSTAPVRPDNAGRKSRSVPRTGWGRGGSEPPKGPWS.

It belongs to the peptidase M48B family. Zn(2+) serves as cofactor.

The protein localises to the cell inner membrane. The protein is Protease HtpX homolog of Rhizobium meliloti (strain 1021) (Ensifer meliloti).